The following is a 261-amino-acid chain: Ribosomal RNA small subunit methyltransferase J (261 aa).

Residues 109–110 (RD), 125–126 (ER), and Asp179 each bind S-adenosyl-L-methionine.

The protein belongs to the methyltransferase superfamily. RsmJ family.

It is found in the cytoplasm. The catalysed reaction is guanosine(1516) in 16S rRNA + S-adenosyl-L-methionine = N(2)-methylguanosine(1516) in 16S rRNA + S-adenosyl-L-homocysteine + H(+). In terms of biological role, specifically methylates the guanosine in position 1516 of 16S rRNA. This Pseudomonas aeruginosa (strain LESB58) protein is Ribosomal RNA small subunit methyltransferase J.